The sequence spans 482 residues: tRNA sulfurtransferase (482 aa).

A THUMP domain is found at 61-165 (SAIRDALTRI…QDRLLLIKGR (105 aa)). Residues 183–184 (LI), lysine 265, glycine 287, and glutamine 296 contribute to the ATP site. The cysteines at positions 344 and 456 are disulfide-linked. One can recognise a Rhodanese domain in the interval 404–482 (FAPTDVLLDI…GFSNVKVYRP (79 aa)). Catalysis depends on cysteine 456, which acts as the Cysteine persulfide intermediate.

Belongs to the ThiI family.

Its subcellular location is the cytoplasm. The enzyme catalyses [ThiI sulfur-carrier protein]-S-sulfanyl-L-cysteine + a uridine in tRNA + 2 reduced [2Fe-2S]-[ferredoxin] + ATP + H(+) = [ThiI sulfur-carrier protein]-L-cysteine + a 4-thiouridine in tRNA + 2 oxidized [2Fe-2S]-[ferredoxin] + AMP + diphosphate. It carries out the reaction [ThiS sulfur-carrier protein]-C-terminal Gly-Gly-AMP + S-sulfanyl-L-cysteinyl-[cysteine desulfurase] + AH2 = [ThiS sulfur-carrier protein]-C-terminal-Gly-aminoethanethioate + L-cysteinyl-[cysteine desulfurase] + A + AMP + 2 H(+). Its pathway is cofactor biosynthesis; thiamine diphosphate biosynthesis. Catalyzes the ATP-dependent transfer of a sulfur to tRNA to produce 4-thiouridine in position 8 of tRNAs, which functions as a near-UV photosensor. Also catalyzes the transfer of sulfur to the sulfur carrier protein ThiS, forming ThiS-thiocarboxylate. This is a step in the synthesis of thiazole, in the thiamine biosynthesis pathway. The sulfur is donated as persulfide by IscS. This chain is tRNA sulfurtransferase, found in Pectobacterium carotovorum subsp. carotovorum (strain PC1).